Reading from the N-terminus, the 353-residue chain is COMPASS component SPP1 (353 aa).

The segment at 22 to 72 (DVYCICKRPDYGELMVGCDGCDDWFHFTCLHIPEQFKDLVFSFYCPYCQAG) adopts a PHD-type zinc-finger fold. Positions 25, 27, 39, 42, 47, 50, 66, and 69 each coordinate Zn(2+). Positions 83-124 (NGEGSLPKTLWKRKCRISDCYKPCLQDSKYCSEEHGREFVND) are non coventional C3H-type zinc finger. Position 87 is a phosphoserine (serine 87). Positions 97, 102, 113, and 117 each coordinate Zn(2+). Basic and acidic residues predominate over residues 235–244 (VECGKEDSKG). The disordered stretch occupies residues 235–255 (VECGKEDSKGTKRKKKKNSSR). A compositionally biased stretch (basic residues) spans 245–255 (TKRKKKKNSSR).

As to quaternary structure, component of the Set1C/COMPASS complex which consists of SET1(2), BRE2(2), SPP1(2), SDC1(1), SHG1(1), SWD1(1), SWD2(1), and SWD3(1).

The protein resides in the nucleus. Component of the Set1C/COMPASS complex that specifically mono-, di- and trimethylates histone H3 to form H3K4me1/2/3, which subsequently plays a role in telomere length maintenance and transcription elongation regulation. COMPASS recognizes ubiquitinated H2B on one face of the nucleosome which stimulates the methylation of H3 on the opposing face. SPP1/CPS40 can recognize methylated histone lysine residue H3K4me3 or unmethylated H3K4. Stimulates the RNA binding activity of SET1. The polypeptide is COMPASS component SPP1 (Saccharomyces cerevisiae (strain ATCC 204508 / S288c) (Baker's yeast)).